We begin with the raw amino-acid sequence, 469 residues long: UDP-N-acetylmuramoylalanine--D-glutamate ligase (469 aa).

125-131 provides a ligand contact to ATP; it reads GTNGKTT.

Belongs to the MurCDEF family.

It localises to the cytoplasm. It carries out the reaction UDP-N-acetyl-alpha-D-muramoyl-L-alanine + D-glutamate + ATP = UDP-N-acetyl-alpha-D-muramoyl-L-alanyl-D-glutamate + ADP + phosphate + H(+). It participates in cell wall biogenesis; peptidoglycan biosynthesis. Cell wall formation. Catalyzes the addition of glutamate to the nucleotide precursor UDP-N-acetylmuramoyl-L-alanine (UMA). This chain is UDP-N-acetylmuramoylalanine--D-glutamate ligase, found in Prochlorococcus marinus (strain NATL2A).